A 311-amino-acid polypeptide reads, in one-letter code: Aspartate carbamoyltransferase catalytic subunit (311 aa).

Carbamoyl phosphate contacts are provided by arginine 55 and threonine 56. Lysine 85 contributes to the L-aspartate binding site. Arginine 106, histidine 135, and glutamine 138 together coordinate carbamoyl phosphate. Residues arginine 168 and arginine 230 each contribute to the L-aspartate site. Carbamoyl phosphate-binding residues include leucine 268 and proline 269.

This sequence belongs to the aspartate/ornithine carbamoyltransferase superfamily. ATCase family. In terms of assembly, heterododecamer (2C3:3R2) of six catalytic PyrB chains organized as two trimers (C3), and six regulatory PyrI chains organized as three dimers (R2).

It carries out the reaction carbamoyl phosphate + L-aspartate = N-carbamoyl-L-aspartate + phosphate + H(+). The protein operates within pyrimidine metabolism; UMP biosynthesis via de novo pathway; (S)-dihydroorotate from bicarbonate: step 2/3. Its function is as follows. Catalyzes the condensation of carbamoyl phosphate and aspartate to form carbamoyl aspartate and inorganic phosphate, the committed step in the de novo pyrimidine nucleotide biosynthesis pathway. The sequence is that of Aspartate carbamoyltransferase catalytic subunit from Yersinia enterocolitica serotype O:8 / biotype 1B (strain NCTC 13174 / 8081).